The sequence spans 379 residues: Presenilin-associated rhomboid-like protein, mitochondrial (379 aa).

A mitochondrion-targeting transit peptide spans 1 to 52 (MAWRGWAQRGWGCGQAWAASVGGRSCEELTAALTPPRLLGRRFNFFIQQKCG). The Mitochondrial matrix portion of the chain corresponds to 53–101 (FRKAPRKVEPRRSDTGTSGEAYKRSALIPPVEETVFYPSPYPIRSLIKP). The residue at position 65 (S65) is a Phosphoserine. T69 carries the phosphothreonine modification. Residue S70 is modified to Phosphoserine. A helical membrane pass occupies residues 102–121 (LFFTVGFTGCAFGSAAIWQY). Residues 122-167 (ESLKSRVQSYFDGIKADWLDSIRPQKEGDFRKEINKWWNNLSDGQR) lie on the Mitochondrial intermembrane side of the membrane. A helical transmembrane segment spans residues 168 to 187 (TVTGIIAANVLVFCLWRVPS). The Mitochondrial matrix portion of the chain corresponds to 188-207 (LQRTMIRYFTSNPASKVLCS). A helical membrane pass occupies residues 208–230 (PMLLSTFSHFSLFHMAANMYVLW). The Mitochondrial intermembrane portion of the chain corresponds to 231 to 244 (SFSSSIVNILGQEQ). The helical transmembrane segment at 245–262 (FMAVYLSAGVISNFVSYV) threads the bilayer. Residues 263–273 (GKVATGRYGPS) are Mitochondrial matrix-facing. A helical transmembrane segment spans residues 274–292 (LGASGAIMTVLAAVCTKIP). Residue S277 is the Nucleophile of the active site. The Mitochondrial intermembrane portion of the chain corresponds to 293–295 (EGR). Residues 296 to 318 (LAIIFLPMFTFTAGNALKAIIAM) form a helical membrane-spanning segment. At 319-332 (DTAGMILGWKFFDH) the chain is on the mitochondrial matrix side. Residues 333–354 (AAHLGGALFGIWYVTYGHELIW) form a helical membrane-spanning segment. The active site involves H335. At 355–379 (KNREPLVKIWHEIRTNGPKKGGGSK) the chain is on the mitochondrial intermembrane side.

Belongs to the peptidase S54 family. As to quaternary structure, interacts with PSEN1 and PSEN2. Binds OPA1. In terms of processing, P-beta is proteolytically processed (beta-cleavage) in a PARL-dependent manner.

Its subcellular location is the mitochondrion inner membrane. The protein resides in the nucleus. It carries out the reaction Cleaves type-1 transmembrane domains using a catalytic dyad composed of serine and histidine that are contributed by different transmembrane domains.. Its function is as follows. Required for the control of apoptosis during postnatal growth. Essential for proteolytic processing of an antiapoptotic form of OPA1 which prevents the release of mitochondrial cytochrome c in response to intrinsic apoptotic signals. Required for the maturation of PINK1 into its 52kDa mature form after its cleavage by mitochondrial-processing peptidase (MPP). Promotes cleavage of serine/threonine-protein phosphatase PGAM5 in damaged mitochondria in response to loss of mitochondrial membrane potential. Mediates differential cleavage of PINK1 and PGAM5 depending on the health status of mitochondria, disassociating from PINK1 and associating with PGAM5 in response to mitochondrial membrane potential loss. Required for processing of CLPB into a form with higher protein disaggregase activity by removing an autoinhibitory N-terminal peptide. Promotes processing of DIABLO/SMAC in the mitochondrion which is required for DIABLO apoptotic activity. Also required for cleavage of STARD7 and TTC19. Promotes changes in mitochondria morphology regulated by phosphorylation of P-beta domain. This Pongo abelii (Sumatran orangutan) protein is Presenilin-associated rhomboid-like protein, mitochondrial (PARL).